The primary structure comprises 284 residues: 2-dehydro-3-deoxyphosphooctonate aldolase (284 aa).

Belongs to the KdsA family.

It localises to the cytoplasm. It carries out the reaction D-arabinose 5-phosphate + phosphoenolpyruvate + H2O = 3-deoxy-alpha-D-manno-2-octulosonate-8-phosphate + phosphate. It participates in carbohydrate biosynthesis; 3-deoxy-D-manno-octulosonate biosynthesis; 3-deoxy-D-manno-octulosonate from D-ribulose 5-phosphate: step 2/3. Its pathway is bacterial outer membrane biogenesis; lipopolysaccharide biosynthesis. In Ralstonia pickettii (strain 12J), this protein is 2-dehydro-3-deoxyphosphooctonate aldolase.